Consider the following 561-residue polypeptide: MCLRSLFLVSLATCVVCGNPSSPPVVDTMKGKVLGKYASLEGVTQSVAVFLGVPFAKPPLGSLRFAPPQPAEPWSFVKNTTTYPPMCSQDATKGQRMNDLLTNRKEKVHLQFSEDCLYLNIYTPADFTKDSRMPVMVWIHGGGLTQGGASTYDGQVLSAYENVVVVAIQYRLGIWGFFSTGDEHSRGNWGHLDQVAALHWVQDNIANFGGDPGSVTIFGESAGGFSVSVLVLSPLSKNLYHRAISESGVVLITELFTKDVRPAAKQIADMAGCKTTTSAIIVHCLRQKTEEELLEIMEKMNLIKLSSQRDTKESYHFLSTVIDDVVLPKDPKEILAEKNFNTVPYIVGINKQECGWLLPTMMRFVPPDVKLDKKMAIMLLEKFASIYGIPEDIIPVAIEKYRKGSDDPIKIRDGILAFIGDVLFCIPSVMVSRDHRDAGAPTYVYEYQYYPSFSSPQRPKDVVGDHADDVYSVFGAPILRDGASEEEIKLSKMVMKFWANFARNGNPNARGLPHWPQYDQKEEYLQIGATTQQSQRLKAEEVAFWTQLLAKRQPQPHHNEL.

The first 18 residues, 1-18 (MCLRSLFLVSLATCVVCG), serve as a signal peptide directing secretion. The N-linked (GlcNAc...) asparagine glycan is linked to N79. Residues C87 and C116 are joined by a disulfide bond. S221 (acyl-ester intermediate) is an active-site residue. A disulfide bridge links C273 with C284. Residues E353 and H466 each act as charge relay system in the active site. Positions 558-561 (HNEL) match the Prevents secretion from ER motif.

It belongs to the type-B carboxylesterase/lipase family. As to quaternary structure, monomer.

It is found in the endoplasmic reticulum lumen. It catalyses the reaction a carboxylic ester + H2O = an alcohol + a carboxylate + H(+). Its function is as follows. Involved in the detoxification of xenobiotics and in the activation of ester and amide prodrugs. The polypeptide is Liver carboxylesterase B-1 (Rattus norvegicus (Rat)).